The following is a 446-amino-acid chain: UPF0597 protein DvMF_1488 (446 aa).

Belongs to the UPF0597 family.

In Nitratidesulfovibrio vulgaris (strain DSM 19637 / Miyazaki F) (Desulfovibrio vulgaris), this protein is UPF0597 protein DvMF_1488.